A 76-amino-acid polypeptide reads, in one-letter code: Exodeoxyribonuclease 7 small subunit (76 aa).

The protein belongs to the XseB family. Heterooligomer composed of large and small subunits.

Its subcellular location is the cytoplasm. The catalysed reaction is Exonucleolytic cleavage in either 5'- to 3'- or 3'- to 5'-direction to yield nucleoside 5'-phosphates.. Functionally, bidirectionally degrades single-stranded DNA into large acid-insoluble oligonucleotides, which are then degraded further into small acid-soluble oligonucleotides. The protein is Exodeoxyribonuclease 7 small subunit of Geobacter sulfurreducens (strain ATCC 51573 / DSM 12127 / PCA).